We begin with the raw amino-acid sequence, 562 residues long: Probable malate:quinone oxidoreductase (562 aa).

The tract at residues 530–562 (EVPDKSATPTDPTIAPKHQHSTTHNANSEMQAL) is disordered. Residues 551–562 (TTHNANSEMQAL) show a composition bias toward polar residues.

This sequence belongs to the MQO family. FAD serves as cofactor.

It catalyses the reaction (S)-malate + a quinone = a quinol + oxaloacetate. The protein operates within carbohydrate metabolism; tricarboxylic acid cycle; oxaloacetate from (S)-malate (quinone route): step 1/1. This Xylella fastidiosa (strain M12) protein is Probable malate:quinone oxidoreductase.